Here is a 307-residue protein sequence, read N- to C-terminus: Oxygen-dependent coproporphyrinogen-III oxidase (307 aa).

Ser-99 contacts substrate. His-103 and His-113 together coordinate a divalent metal cation. His-113 serves as the catalytic Proton donor. 115-117 (NVR) is a substrate binding site. A divalent metal cation contacts are provided by His-152 and His-182. An important for dimerization region spans residues 247–282 (YVEFNLVFDRGTLFGLQSGGRTESILMSMPPVVNWR). A substrate-binding site is contributed by 265-267 (GGR).

Belongs to the aerobic coproporphyrinogen-III oxidase family. Homodimer. A divalent metal cation is required as a cofactor.

It localises to the cytoplasm. The enzyme catalyses coproporphyrinogen III + O2 + 2 H(+) = protoporphyrinogen IX + 2 CO2 + 2 H2O. It participates in porphyrin-containing compound metabolism; protoporphyrin-IX biosynthesis; protoporphyrinogen-IX from coproporphyrinogen-III (O2 route): step 1/1. In terms of biological role, involved in the heme biosynthesis. Catalyzes the aerobic oxidative decarboxylation of propionate groups of rings A and B of coproporphyrinogen-III to yield the vinyl groups in protoporphyrinogen-IX. This is Oxygen-dependent coproporphyrinogen-III oxidase from Paraburkholderia xenovorans (strain LB400).